A 383-amino-acid polypeptide reads, in one-letter code: MAEKRDYYDVLGVGRDASDDEIKKAYRKLSKKYHPDINKAPDAEAKFKEVTEAYEALSDPQKRAAYDQYGHAGMNGGFGGGAGAGQGFGGFGGGAEGFGGFDDIFSSFFGGGARQQPNGPRQGSDLQYRMDLKFEEAVFGKETKISYSREAECHTCHGSGAKPGTSAETCHKCHGAGQIQVERQTPLGRMMSRETCDVCGGTGKEIKSKCDTCHGTGREEERHTVKVKVPAGVEDGQQMRLQGQGEAGSNGGPYGDLFIVFRVAPSDEFERDGAQIFVEVPISFVQAALGDEIEVNTVHGPVKLKIPAGTQTNTVFRLRGKGAPKLHGTGNGDQNVTVNVVTPKTLNSKQRDALKAFAVASGDSVNPQDSNLFDKILNKKYKK.

Residues 6 to 70 (DYYDVLGVGR…QKRAAYDQYG (65 aa)) form the J domain. The CR-type zinc-finger motif lies at 140 to 222 (GKETKISYSR…CHGTGREEER (83 aa)). Zn(2+)-binding residues include cysteine 153, cysteine 156, cysteine 170, cysteine 173, cysteine 196, cysteine 199, cysteine 210, and cysteine 213. 4 CXXCXGXG motif repeats span residues 153 to 160 (CHTCHGSG), 170 to 177 (CHKCHGAG), 196 to 203 (CDVCGGTG), and 210 to 217 (CDTCHGTG).

It belongs to the DnaJ family. Homodimer. Zn(2+) is required as a cofactor.

It is found in the cytoplasm. In terms of biological role, participates actively in the response to hyperosmotic and heat shock by preventing the aggregation of stress-denatured proteins and by disaggregating proteins, also in an autonomous, DnaK-independent fashion. Unfolded proteins bind initially to DnaJ; upon interaction with the DnaJ-bound protein, DnaK hydrolyzes its bound ATP, resulting in the formation of a stable complex. GrpE releases ADP from DnaK; ATP binding to DnaK triggers the release of the substrate protein, thus completing the reaction cycle. Several rounds of ATP-dependent interactions between DnaJ, DnaK and GrpE are required for fully efficient folding. Also involved, together with DnaK and GrpE, in the DNA replication of plasmids through activation of initiation proteins. The protein is Chaperone protein DnaJ of Latilactobacillus sakei subsp. sakei (strain 23K) (Lactobacillus sakei subsp. sakei).